The primary structure comprises 376 residues: Succinyl-diaminopimelate desuccinylase (376 aa).

Residue histidine 67 participates in Zn(2+) binding. The active site involves aspartate 69. Aspartate 100 provides a ligand contact to Zn(2+). Glutamate 134 serves as the catalytic Proton acceptor. Residues glutamate 135, glutamate 163, and histidine 349 each coordinate Zn(2+).

This sequence belongs to the peptidase M20A family. DapE subfamily. In terms of assembly, homodimer. Zn(2+) serves as cofactor. Co(2+) is required as a cofactor.

It carries out the reaction N-succinyl-(2S,6S)-2,6-diaminopimelate + H2O = (2S,6S)-2,6-diaminopimelate + succinate. It participates in amino-acid biosynthesis; L-lysine biosynthesis via DAP pathway; LL-2,6-diaminopimelate from (S)-tetrahydrodipicolinate (succinylase route): step 3/3. In terms of biological role, catalyzes the hydrolysis of N-succinyl-L,L-diaminopimelic acid (SDAP), forming succinate and LL-2,6-diaminopimelate (DAP), an intermediate involved in the bacterial biosynthesis of lysine and meso-diaminopimelic acid, an essential component of bacterial cell walls. This Shewanella denitrificans (strain OS217 / ATCC BAA-1090 / DSM 15013) protein is Succinyl-diaminopimelate desuccinylase.